Reading from the N-terminus, the 65-residue chain is Large ribosomal subunit protein bL32 (65 aa).

Belongs to the bacterial ribosomal protein bL32 family.

This Rickettsia prowazekii (strain Madrid E) protein is Large ribosomal subunit protein bL32 (rpmF).